The chain runs to 75 residues: Small ribosomal subunit protein bS18 (75 aa).

This sequence belongs to the bacterial ribosomal protein bS18 family. Part of the 30S ribosomal subunit. Forms a tight heterodimer with protein bS6.

Binds as a heterodimer with protein bS6 to the central domain of the 16S rRNA, where it helps stabilize the platform of the 30S subunit. The polypeptide is Small ribosomal subunit protein bS18 (Photobacterium profundum (strain SS9)).